The primary structure comprises 428 residues: GTPase Obg (428 aa).

Residues 1–158 (MFVDQVQVEV…RFIKLELKVL (158 aa)) form the Obg domain. An OBG-type G domain is found at 159–333 (ADVGLVGFPS…LMHKTAEVLK (175 aa)). GTP contacts are provided by residues 165–172 (GFPSVGKS), 190–194 (FTTLV), 212–215 (DLPG), 282–285 (TKMD), and 314–316 (SSL). Positions 172 and 192 each coordinate Mg(2+). The 79-residue stretch at 350-428 (YKYQPEPALK…IDDFTFEFVE (79 aa)) folds into the OCT domain.

Belongs to the TRAFAC class OBG-HflX-like GTPase superfamily. OBG GTPase family. As to quaternary structure, monomer. The cofactor is Mg(2+).

The protein resides in the cytoplasm. Its function is as follows. An essential GTPase which binds GTP, GDP and possibly (p)ppGpp with moderate affinity, with high nucleotide exchange rates and a fairly low GTP hydrolysis rate. Plays a role in control of the cell cycle, stress response, ribosome biogenesis and in those bacteria that undergo differentiation, in morphogenesis control. The sequence is that of GTPase Obg from Lacticaseibacillus paracasei (strain ATCC 334 / BCRC 17002 / CCUG 31169 / CIP 107868 / KCTC 3260 / NRRL B-441) (Lactobacillus paracasei).